The following is a 149-amino-acid chain: Detocs response regulatory protein DtcB (149 aa).

The region spanning 1–134 is the Response regulatory domain; the sequence is MILIVEDDAH…DIEACYYDHN (134 aa). Residue D53 is modified to 4-aspartylphosphate.

Probably phosphorylated by DtcA.

Its function is as follows. Possible phosphate scavenger member of the two-component regulatory system Detocs that confers resistance to bacteriophage. When the system (DtcA-DtcB-DtcC) is expressed in a susceptible E.coli (strain MG1655) it confers resistance to bacteriophages T2, T4, T5, T6 and SECphi27. Detocs inhibits T5 infection leading to growth arrest but not complete cell lysis, during SECphi27 infection leads to cell lysis. Overexpression of this protein along with the intact Detocs locus cancels T5 immunity; when the phosphate-receiving Asp-53 is mutated to Ala in this protein, immunity is restored. DtcA probably autophosphorylates upon sensing viral infection, and subsequently transfers the phosphate signal to DtcC which activates it, leading to an antiviral defense; DtcB (this subunit) may scavenge phosphorylation signals from accidental activation of DtcA. The protein is Detocs response regulatory protein DtcB of Vibrio alginolyticus.